Reading from the N-terminus, the 282-residue chain is Bis(5'-nucleosyl)-tetraphosphatase, symmetrical (282 aa).

Belongs to the Ap4A hydrolase family.

It catalyses the reaction P(1),P(4)-bis(5'-adenosyl) tetraphosphate + H2O = 2 ADP + 2 H(+). Functionally, hydrolyzes diadenosine 5',5'''-P1,P4-tetraphosphate to yield ADP. This is Bis(5'-nucleosyl)-tetraphosphatase, symmetrical from Burkholderia pseudomallei (strain 1106a).